A 427-amino-acid polypeptide reads, in one-letter code: Enolase (427 aa).

Position 163 (glutamine 163) interacts with (2R)-2-phosphoglycerate. Glutamate 205 serves as the catalytic Proton donor. Positions 242, 285, and 312 each coordinate Mg(2+). Residues lysine 337, arginine 366, serine 367, and lysine 388 each contribute to the (2R)-2-phosphoglycerate site. Lysine 337 (proton acceptor) is an active-site residue.

This sequence belongs to the enolase family. Requires Mg(2+) as cofactor.

It localises to the cytoplasm. Its subcellular location is the secreted. The protein localises to the cell surface. It catalyses the reaction (2R)-2-phosphoglycerate = phosphoenolpyruvate + H2O. The protein operates within carbohydrate degradation; glycolysis; pyruvate from D-glyceraldehyde 3-phosphate: step 4/5. Catalyzes the reversible conversion of 2-phosphoglycerate (2-PG) into phosphoenolpyruvate (PEP). It is essential for the degradation of carbohydrates via glycolysis. This is Enolase from Bradyrhizobium sp. (strain ORS 278).